A 320-amino-acid chain; its full sequence is NAD kinase (320 aa).

Asp-96 functions as the Proton acceptor in the catalytic mechanism. Residues 96 to 97, Arg-101, 170 to 171, Asp-200, and 211 to 216 each bind NAD(+); these read DG, NE, and TAYAFS.

The protein belongs to the NAD kinase family. It depends on a divalent metal cation as a cofactor.

The protein resides in the cytoplasm. The enzyme catalyses NAD(+) + ATP = ADP + NADP(+) + H(+). Involved in the regulation of the intracellular balance of NAD and NADP, and is a key enzyme in the biosynthesis of NADP. Catalyzes specifically the phosphorylation on 2'-hydroxyl of the adenosine moiety of NAD to yield NADP. The chain is NAD kinase from Rhodococcus opacus (strain B4).